A 161-amino-acid polypeptide reads, in one-letter code: Cytochrome c-type biogenesis protein CcmE (161 aa).

At 1 to 8 the chain is on the cytoplasmic side; sequence MNPRRKKR. The chain crosses the membrane as a helical; Signal-anchor for type II membrane protein span at residues 9 to 29; the sequence is LTLAVALVFGLGATIGLMLYA. Topologically, residues 30–161 are periplasmic; it reads LSQNMDLFYT…SDEQKQGRVQ (132 aa). Positions 129 and 133 each coordinate heme.

Belongs to the CcmE/CycJ family.

The protein resides in the cell inner membrane. Functionally, heme chaperone required for the biogenesis of c-type cytochromes. Transiently binds heme delivered by CcmC and transfers the heme to apo-cytochromes in a process facilitated by CcmF and CcmH. The protein is Cytochrome c-type biogenesis protein CcmE of Photobacterium profundum (strain SS9).